The primary structure comprises 154 residues: Interleukin-2 (154 aa).

The signal sequence occupies residues 1-20; the sequence is MYRMQLLSCIALSLALVTNS. Residue Thr-23 is glycosylated (O-linked (GalNAc...) threonine). A disulfide bridge connects residues Cys-78 and Cys-126.

The protein belongs to the IL-2 family.

The protein localises to the secreted. In terms of biological role, cytokine produced by activated CD4-positive helper T-cells and to a lesser extend activated CD8-positive T-cells and natural killer (NK) cells that plays pivotal roles in the immune response and tolerance. Binds to a receptor complex composed of either the high-affinity trimeric IL-2R (IL2RA/CD25, IL2RB/CD122 and IL2RG/CD132) or the low-affinity dimeric IL-2R (IL2RB and IL2RG). Interaction with the receptor leads to oligomerization and conformation changes in the IL-2R subunits resulting in downstream signaling starting with phosphorylation of JAK1 and JAK3. In turn, JAK1 and JAK3 phosphorylate the receptor to form a docking site leading to the phosphorylation of several substrates including STAT5. This process leads to activation of several pathways including STAT, phosphoinositide-3-kinase/PI3K and mitogen-activated protein kinase/MAPK pathways. Functions as a T-cell growth factor and can increase NK-cell cytolytic activity as well. Promotes strong proliferation of activated B-cells and subsequently immunoglobulin production. Plays a pivotal role in regulating the adaptive immune system by controlling the survival and proliferation of regulatory T-cells, which are required for the maintenance of immune tolerance. Moreover, participates in the differentiation and homeostasis of effector T-cell subsets, including Th1, Th2, Th17 as well as memory CD8-positive T-cells. This is Interleukin-2 (IL2) from Macaca fascicularis (Crab-eating macaque).